Reading from the N-terminus, the 74-residue chain is Small ribosomal subunit protein bS18 (74 aa).

This sequence belongs to the bacterial ribosomal protein bS18 family. In terms of assembly, part of the 30S ribosomal subunit. Forms a tight heterodimer with protein bS6.

Binds as a heterodimer with protein bS6 to the central domain of the 16S rRNA, where it helps stabilize the platform of the 30S subunit. This Rhizorhabdus wittichii (strain DSM 6014 / CCUG 31198 / JCM 15750 / NBRC 105917 / EY 4224 / RW1) (Sphingomonas wittichii) protein is Small ribosomal subunit protein bS18.